A 399-amino-acid polypeptide reads, in one-letter code: G2/mitotic-specific cyclin-B2 (399 aa).

The tract at residues 58-78 (PVKATKGPGKMTNTVVPPKPP) is disordered.

It belongs to the cyclin family. Cyclin AB subfamily. In terms of assembly, interacts with the CDK1 protein kinase to form a serine/threonine kinase holoenzyme complex also known as maturation promoting factor (MPF). The cyclin subunit imparts substrate specificity to the complex.

Essential for the control of the cell cycle at the G2/M (mitosis) transition. The sequence is that of G2/mitotic-specific cyclin-B2 (CCNB2) from Gallus gallus (Chicken).